Consider the following 293-residue polypeptide: 33 kDa chaperonin (293 aa).

2 disulfide bridges follow: C238–C240 and C271–C274.

It belongs to the HSP33 family. Under oxidizing conditions two disulfide bonds are formed involving the reactive cysteines. Under reducing conditions zinc is bound to the reactive cysteines and the protein is inactive.

The protein localises to the cytoplasm. Its function is as follows. Redox regulated molecular chaperone. Protects both thermally unfolding and oxidatively damaged proteins from irreversible aggregation. Plays an important role in the bacterial defense system toward oxidative stress. This Clostridium beijerinckii (strain ATCC 51743 / NCIMB 8052) (Clostridium acetobutylicum) protein is 33 kDa chaperonin.